A 476-amino-acid polypeptide reads, in one-letter code: Cysteine--tRNA ligase (476 aa).

Cysteine 29 provides a ligand contact to Zn(2+). A 'HIGH' region motif is present at residues 31-41 (PTVYDYTHLGH). The Zn(2+) site is built by cysteine 209, histidine 234, and glutamate 238. The 'KMSKS' region signature appears at 266–270 (KMSKS). Residue lysine 269 participates in ATP binding.

This sequence belongs to the class-I aminoacyl-tRNA synthetase family. Zn(2+) is required as a cofactor.

Its subcellular location is the cytoplasm. It catalyses the reaction tRNA(Cys) + L-cysteine + ATP = L-cysteinyl-tRNA(Cys) + AMP + diphosphate. The chain is Cysteine--tRNA ligase from Thermococcus onnurineus (strain NA1).